We begin with the raw amino-acid sequence, 452 residues long: Glutamate--tRNA ligase 2 (452 aa).

Positions 8-18 (PSPTGRLHVGN) match the 'HIGH' region motif. The 'KMSKS' region motif lies at 246 to 250 (KLSKR). K249 lines the ATP pocket.

Belongs to the class-I aminoacyl-tRNA synthetase family. Glutamate--tRNA ligase type 1 subfamily. Monomer.

It is found in the cytoplasm. The enzyme catalyses tRNA(Glu) + L-glutamate + ATP = L-glutamyl-tRNA(Glu) + AMP + diphosphate. In terms of biological role, catalyzes the attachment of glutamate to tRNA(Glu) in a two-step reaction: glutamate is first activated by ATP to form Glu-AMP and then transferred to the acceptor end of tRNA(Glu). The chain is Glutamate--tRNA ligase 2 from Erythrobacter litoralis (strain HTCC2594).